The primary structure comprises 547 residues: Natural resistance-associated macrophage protein 1 (547 aa).

The interval 1-30 (MTGDKDPQSVSRPNYGSISHPPSSEPQQEP) is disordered. At 1-54 (MTGDKDPQSVSRPNYGSISHPPSSEPQQEPLRTTYLSEKIPIPDTEPGTFSLRK) the chain is on the cytoplasmic side. Residues 8–17 (QSVSRPNYGS) are compositionally biased toward polar residues. Positions 21 to 30 (PPSSEPQQEP) are enriched in low complexity. A helical membrane pass occupies residues 55-75 (LWAFTGPGFLMSIAFLDPGNI). The Extracellular segment spans residues 76-81 (ESDLQA). The chain crosses the membrane as a helical span at residues 82–102 (GAVAGFKLLWVLLWATVLGLL). Residues 103–139 (CQRLAARLGVVTGKDLGEICHLYYPKVPRTLLWLTIE) lie on the Cytoplasmic side of the membrane. Residues 140–160 (LAIVGSDMQEVIGTAIAFSLL) form a helical membrane-spanning segment. Residues 161-164 (SAGR) are Extracellular-facing. Residues 165–185 (IPLWGGVLITIVDTFFFLFLD) form a helical membrane-spanning segment. The Cytoplasmic portion of the chain corresponds to 186–193 (NYGLRKLE). Residues 194–214 (AFFGILITIMALTFGYEYVVA) form a helical membrane-spanning segment. Residues 215 to 240 (RPAQVALLQGLLLPSCPGCGRPELLQ) are Extracellular-facing. The helical transmembrane segment at 241–261 (AVGIVGAIIMPHNIYLHSALV) threads the bilayer. The Cytoplasmic segment spans residues 262-286 (KSREIDRSRRPDIREANMYFLIEAS). Residues 287–307 (IALSVSFFINLFVVAVFGQAF) form a helical membrane-spanning segment. Residues 308–346 (YQQTNEAAFNVCANSSLHDYAKIFPRNNLTVEVDIYQGG) are Extracellular-facing. N321 and N335 each carry an N-linked (GlcNAc...) asparagine glycan. A helical transmembrane segment spans residues 347 to 367 (VMLGCVFGPAALYIWAVGLLA). Topologically, residues 368–394 (AGQSSTMTGTYAGQFVMEGFLRLRWSR) are cytoplasmic. The chain crosses the membrane as a helical span at residues 395-415 (FARVLLTRSCAILPTVLVVVF). Over 416–432 (RDLKDLSGLNDLLNVLQ) the chain is Extracellular. The helical transmembrane segment at 433–453 (SLLLPFAVLPILTFTSMPALM) threads the bilayer. Residues 454–464 (QEFANGRLSKA) are Cytoplasmic-facing. The helical transmembrane segment at 465–485 (ITSFIMALVCAINLYFVVIYL) threads the bilayer. Residues 486-492 (PSLPHPA) lie on the Extracellular side of the membrane. A helical transmembrane segment spans residues 493-513 (YFILVALLAIVYLGLTTYLVW). Residues 514–547 (TCFIAHGVTLLAHSSHQHFLYGLPDVEEKGKISG) lie on the Cytoplasmic side of the membrane.

The protein belongs to the NRAMP family.

The protein localises to the late endosome membrane. The protein resides in the lysosome membrane. The catalysed reaction is Zn(2+)(in) + H(+)(out) = Zn(2+)(out) + H(+)(in). The enzyme catalyses Fe(2+)(in) + H(+)(out) = Fe(2+)(out) + H(+)(in). It carries out the reaction Mn(2+)(in) + H(+)(out) = Mn(2+)(out) + H(+)(in). In terms of biological role, macrophage-specific antiporter that fluxes metal ions in either direction against a proton gradient. Localized to late endosomal lysosomal membranes, delivers bivalent cations from the cytosol into these acidic compartments where they may directly affect antimicrobial activity. Involved in iron metabolism and host natural resistance to infection with intracellular parasites. Pathogen resistance involves sequestration of Fe(2+) and Mn(2+), cofactors of both prokaryotic and eukaryotic catalases and superoxide dismutases, not only to protect the macrophage against its own generation of reactive oxygen species, but to deny the cations to the pathogen for synthesis of its protective enzymes. The polypeptide is Natural resistance-associated macrophage protein 1 (SLC11A1) (Canis lupus familiaris (Dog)).